A 402-amino-acid chain; its full sequence is Zinc finger protein 586 (402 aa).

Residues Val15–Pro87 form the KRAB domain. The C2H2-type 1; degenerate zinc-finger motif lies at Tyr88–Arg116. The C2H2-type 2; degenerate zinc finger occupies Tyr122–His144. A C2H2-type 3; degenerate zinc finger spans residues Tyr150–His172. 8 C2H2-type zinc fingers span residues Tyr178–His200, Tyr206–His228, Tyr234–His256, Tyr262–His284, Tyr290–His312, His317–His339, Tyr345–His367, and Tyr373–His395.

It belongs to the krueppel C2H2-type zinc-finger protein family.

Its subcellular location is the nucleus. May be involved in transcriptional regulation. The sequence is that of Zinc finger protein 586 (ZNF586) from Homo sapiens (Human).